A 238-amino-acid polypeptide reads, in one-letter code: Doublecortin domain-containing protein (238 aa).

A partial p25alpha domain region spans residues 82–112 (VFERLNDKQFYTGVQKTKFMELLKNNKNKSS). One can recognise a Doublecortin domain in the interval 151–232 (KTIFLFNNEK…GDPPAPIRNL (82 aa)).

As to quaternary structure, interacts with alpha-tubulin 1 and beta-tubulin; the interaction stabilizes microtubule assembly.

The protein localises to the cytoplasm. It is found in the cytoskeleton. Functionally, involved in the stabilization of microtubules. Probably by controlling microtubules stabilization, plays a role in invasion, microneme secretion and parasite growth in host erythrocytes. The protein is Doublecortin domain-containing protein of Plasmodium falciparum (isolate 3D7).